The primary structure comprises 102 residues: Small ribosomal subunit protein uS10c (102 aa).

This sequence belongs to the universal ribosomal protein uS10 family. As to quaternary structure, part of the 30S ribosomal subunit.

The protein localises to the plastid. It is found in the chloroplast. Functionally, involved in the binding of tRNA to the ribosomes. The protein is Small ribosomal subunit protein uS10c of Guillardia theta (Cryptophyte).